A 113-amino-acid polypeptide reads, in one-letter code: Large ribosomal subunit protein uL22 (113 aa).

The protein belongs to the universal ribosomal protein uL22 family. As to quaternary structure, part of the 50S ribosomal subunit.

Functionally, this protein binds specifically to 23S rRNA; its binding is stimulated by other ribosomal proteins, e.g. L4, L17, and L20. It is important during the early stages of 50S assembly. It makes multiple contacts with different domains of the 23S rRNA in the assembled 50S subunit and ribosome. In terms of biological role, the globular domain of the protein is located near the polypeptide exit tunnel on the outside of the subunit, while an extended beta-hairpin is found that lines the wall of the exit tunnel in the center of the 70S ribosome. This chain is Large ribosomal subunit protein uL22, found in Halothermothrix orenii (strain H 168 / OCM 544 / DSM 9562).